The chain runs to 249 residues: uncharacterized protein (249 aa).

Residues 1-36 (MAKSPARRCTAKVRRVLSRSVLILCWSLLGAAPAHA) form the signal peptide. The tract at residues 227–249 (ARQPPGRWVCPSSAGGPIGWHRQ) is disordered.

This is an uncharacterized protein from Mycobacterium tuberculosis (strain CDC 1551 / Oshkosh).